A 232-amino-acid chain; its full sequence is Phosphatidylserine decarboxylase proenzyme (232 aa).

Catalysis depends on Ser-190, which acts as the Schiff-base intermediate with substrate; via pyruvic acid. Pyruvic acid (Ser); by autocatalysis is present on Ser-190.

This sequence belongs to the phosphatidylserine decarboxylase family. PSD-A subfamily. In terms of assembly, heterodimer of a large membrane-associated beta subunit and a small pyruvoyl-containing alpha subunit. Requires pyruvate as cofactor. Is synthesized initially as an inactive proenzyme. Formation of the active enzyme involves a self-maturation process in which the active site pyruvoyl group is generated from an internal serine residue via an autocatalytic post-translational modification. Two non-identical subunits are generated from the proenzyme in this reaction, and the pyruvate is formed at the N-terminus of the alpha chain, which is derived from the carboxyl end of the proenzyme. The post-translation cleavage follows an unusual pathway, termed non-hydrolytic serinolysis, in which the side chain hydroxyl group of the serine supplies its oxygen atom to form the C-terminus of the beta chain, while the remainder of the serine residue undergoes an oxidative deamination to produce ammonia and the pyruvoyl prosthetic group on the alpha chain.

The protein resides in the cell membrane. The catalysed reaction is a 1,2-diacyl-sn-glycero-3-phospho-L-serine + H(+) = a 1,2-diacyl-sn-glycero-3-phosphoethanolamine + CO2. It participates in phospholipid metabolism; phosphatidylethanolamine biosynthesis; phosphatidylethanolamine from CDP-diacylglycerol: step 2/2. Functionally, catalyzes the formation of phosphatidylethanolamine (PtdEtn) from phosphatidylserine (PtdSer). This is Phosphatidylserine decarboxylase proenzyme from Cereibacter sphaeroides (strain ATCC 17025 / ATH 2.4.3) (Rhodobacter sphaeroides).